Reading from the N-terminus, the 309-residue chain is Olfactory receptor-like protein OLF4 (309 aa).

Over 1–25 (MELENDTRIPEFLLLGFSEEPKLQP) the chain is Extracellular. The N-linked (GlcNAc...) asparagine glycan is linked to Asn-5. A helical transmembrane segment spans residues 26 to 49 (FLFGLFLSMYLVTILGNLLLILAV). The Cytoplasmic segment spans residues 50 to 57 (SSDSHLHT). Residues 58–79 (PMYFFLANLSFVDICFTCTTIP) traverse the membrane as a helical segment. Residues 80–100 (KMLVNIQTQRKVITYESCIIQ) are Extracellular-facing. A helical transmembrane segment spans residues 101 to 120 (MYFFELFAGIDNFLLTVMAY). The Cytoplasmic portion of the chain corresponds to 121–139 (DRYMAICYPLHYMVIMNPQ). A helical transmembrane segment spans residues 140 to 158 (LCSLLLLVSWIMSALHSLL). Topologically, residues 159–196 (QTLMVLRLSFCTHFQIPHFFCELNQMIQLACSDTFLNN) are extracellular. The helical transmembrane segment at 197–219 (MMLYFAAILLGVAPLVGVLYSYF) threads the bilayer. At 220–236 (KIVSSIRGISSAHSKYK) the chain is on the cytoplasmic side. The chain crosses the membrane as a helical span at residues 237–260 (AFSTCASHLSVVSLFYCTSLGVYL). Topologically, residues 261–272 (SSAAPQSTHTSS) are extracellular. Residues 273–292 (VASVMYTVVTPMLNPFIYSL) form a helical membrane-spanning segment. Topologically, residues 293–309 (RNKDIKGALNVFFRGKP) are cytoplasmic.

It belongs to the G-protein coupled receptor 1 family.

The protein resides in the cell membrane. Putative odorant or sperm cell receptor. The sequence is that of Olfactory receptor-like protein OLF4 from Canis lupus familiaris (Dog).